Here is a 232-residue protein sequence, read N- to C-terminus: Ubiquinone biosynthesis O-methyltransferase (232 aa).

4 residues coordinate S-adenosyl-L-methionine: Arg-36, Gly-55, Asp-76, and Leu-120.

Belongs to the methyltransferase superfamily. UbiG/COQ3 family.

It catalyses the reaction a 3-demethylubiquinol + S-adenosyl-L-methionine = a ubiquinol + S-adenosyl-L-homocysteine + H(+). The enzyme catalyses a 3-(all-trans-polyprenyl)benzene-1,2-diol + S-adenosyl-L-methionine = a 2-methoxy-6-(all-trans-polyprenyl)phenol + S-adenosyl-L-homocysteine + H(+). The protein operates within cofactor biosynthesis; ubiquinone biosynthesis. O-methyltransferase that catalyzes the 2 O-methylation steps in the ubiquinone biosynthetic pathway. The sequence is that of Ubiquinone biosynthesis O-methyltransferase from Pseudomonas entomophila (strain L48).